A 337-amino-acid polypeptide reads, in one-letter code: N-acetyl-gamma-glutamyl-phosphate reductase (337 aa).

Cys-155 is a catalytic residue.

This sequence belongs to the NAGSA dehydrogenase family. Type 1 subfamily.

The protein resides in the cytoplasm. The catalysed reaction is N-acetyl-L-glutamate 5-semialdehyde + phosphate + NADP(+) = N-acetyl-L-glutamyl 5-phosphate + NADPH + H(+). It functions in the pathway amino-acid biosynthesis; L-arginine biosynthesis; N(2)-acetyl-L-ornithine from L-glutamate: step 3/4. Its function is as follows. Catalyzes the NADPH-dependent reduction of N-acetyl-5-glutamyl phosphate to yield N-acetyl-L-glutamate 5-semialdehyde. The chain is N-acetyl-gamma-glutamyl-phosphate reductase from Alteromonas mediterranea (strain DSM 17117 / CIP 110805 / LMG 28347 / Deep ecotype).